The chain runs to 101 residues: uncharacterized protein (101 aa).

The chain crosses the membrane as a helical span at residues 70-90 (VLFIPIILLLPPSCPLTGVTV).

The protein resides in the membrane. This is an uncharacterized protein from Saccharomyces cerevisiae (strain ATCC 204508 / S288c) (Baker's yeast).